Reading from the N-terminus, the 359-residue chain is 3-dehydroquinate synthase (359 aa).

NAD(+) contacts are provided by residues 70 to 75 (DAEGGK), 104 to 108 (GAATD), 128 to 129 (TT), lysine 141, and lysine 150. Positions 183, 246, and 262 each coordinate Zn(2+).

Belongs to the sugar phosphate cyclases superfamily. Dehydroquinate synthase family. Requires Co(2+) as cofactor. Zn(2+) is required as a cofactor. NAD(+) serves as cofactor.

The protein resides in the cytoplasm. It carries out the reaction 7-phospho-2-dehydro-3-deoxy-D-arabino-heptonate = 3-dehydroquinate + phosphate. It functions in the pathway metabolic intermediate biosynthesis; chorismate biosynthesis; chorismate from D-erythrose 4-phosphate and phosphoenolpyruvate: step 2/7. Catalyzes the conversion of 3-deoxy-D-arabino-heptulosonate 7-phosphate (DAHP) to dehydroquinate (DHQ). The sequence is that of 3-dehydroquinate synthase from Mycolicibacterium vanbaalenii (strain DSM 7251 / JCM 13017 / BCRC 16820 / KCTC 9966 / NRRL B-24157 / PYR-1) (Mycobacterium vanbaalenii).